The following is a 220-amino-acid chain: Deoxyribose-phosphate aldolase (220 aa).

Asp-92 serves as the catalytic Proton donor/acceptor. Lys-155 (schiff-base intermediate with acetaldehyde) is an active-site residue. Lys-184 functions as the Proton donor/acceptor in the catalytic mechanism.

The protein belongs to the DeoC/FbaB aldolase family. DeoC type 1 subfamily.

It localises to the cytoplasm. The catalysed reaction is 2-deoxy-D-ribose 5-phosphate = D-glyceraldehyde 3-phosphate + acetaldehyde. The protein operates within carbohydrate degradation; 2-deoxy-D-ribose 1-phosphate degradation; D-glyceraldehyde 3-phosphate and acetaldehyde from 2-deoxy-alpha-D-ribose 1-phosphate: step 2/2. Catalyzes a reversible aldol reaction between acetaldehyde and D-glyceraldehyde 3-phosphate to generate 2-deoxy-D-ribose 5-phosphate. The polypeptide is Deoxyribose-phosphate aldolase (Natranaerobius thermophilus (strain ATCC BAA-1301 / DSM 18059 / JW/NM-WN-LF)).